The following is a 125-amino-acid chain: Ribosome maturation factor RimP (125 aa).

This sequence belongs to the RimP family.

It is found in the cytoplasm. Functionally, required for maturation of 30S ribosomal subunits. The protein is Ribosome maturation factor RimP of Rickettsia canadensis (strain McKiel).